The following is a 333-amino-acid chain: Anthranilate phosphoribosyltransferase (333 aa).

5-phospho-alpha-D-ribose 1-diphosphate-binding positions include G78, 81–82, T86, 88–91, 106–114, and S118; these read GD, NVST, and KHGNYSVSS. G78 provides a ligand contact to anthranilate. S90 contacts Mg(2+). Residue N109 coordinates anthranilate. R164 is a binding site for anthranilate. Mg(2+) contacts are provided by D222 and E223.

This sequence belongs to the anthranilate phosphoribosyltransferase family. As to quaternary structure, homodimer. The cofactor is Mg(2+).

The catalysed reaction is N-(5-phospho-beta-D-ribosyl)anthranilate + diphosphate = 5-phospho-alpha-D-ribose 1-diphosphate + anthranilate. It participates in amino-acid biosynthesis; L-tryptophan biosynthesis; L-tryptophan from chorismate: step 2/5. Its function is as follows. Catalyzes the transfer of the phosphoribosyl group of 5-phosphorylribose-1-pyrophosphate (PRPP) to anthranilate to yield N-(5'-phosphoribosyl)-anthranilate (PRA). This Natronomonas pharaonis (strain ATCC 35678 / DSM 2160 / CIP 103997 / JCM 8858 / NBRC 14720 / NCIMB 2260 / Gabara) (Halobacterium pharaonis) protein is Anthranilate phosphoribosyltransferase.